The following is an 863-amino-acid chain: Receptor-like protein 9DC3 (863 aa).

Residues Met-1–Ser-21 form the signal peptide. At Ser-22–Gln-812 the chain is on the extracellular side. Positions Leu-24–Gln-90 are N-cap. N-linked (GlcNAc...) asparagine glycans are attached at residues Asn-71 and Asn-108. One copy of the LRR 1; degenerate repeat lies at Val-91–Leu-114. 2 LRR repeats span residues Ser-115–Glu-138 and Ser-140–Leu-163. Residues Ser-164 to Asn-190 form an LRR 4; degenerate repeat. Residues Asn-190, Asn-203, and Asn-211 are each glycosylated (N-linked (GlcNAc...) asparagine). 6 LRR repeats span residues Leu-191 to Ser-213, Ser-214 to Leu-237, Leu-240 to Ser-262, Ala-264 to His-286, Leu-287 to Leu-311, and Thr-312 to Lys-336. Asn-261 carries an N-linked (GlcNAc...) asparagine glycan. 2 N-linked (GlcNAc...) asparagine glycosylation sites follow: Asn-299 and Asn-310. The LRR 11; degenerate repeat unit spans residues Leu-337–Phe-357. LRR repeat units follow at residues Asn-358 to Leu-382, Gln-383 to Leu-406, Ser-408 to Ser-428, Lys-429 to Gln-452, Asn-454 to Leu-476, Lys-477 to Arg-500, Glu-502 to Val-524, Gly-525 to Cys-549, Tyr-551 to His-572, Leu-573 to Asn-597, Phe-599 to Asn-623, Leu-667 to Asp-690, Leu-691 to Asn-714, Leu-715 to Leu-739, and Phe-741 to Gly-759. N-linked (GlcNAc...) asparagine glycans are attached at residues Asn-378, Asn-396, and Asn-416. An N-linked (GlcNAc...) asparagine glycan is attached at Asn-464. Asn-519 is a glycosylation site (N-linked (GlcNAc...) asparagine). Asn-563 carries an N-linked (GlcNAc...) asparagine glycan. N-linked (GlcNAc...) asparagine glycans are attached at residues Asn-674, Asn-698, and Asn-714. N-linked (GlcNAc...) asparagine glycans are attached at residues Asn-746 and Asn-767. Residues Lys-760 to Gln-812 form a C-cap/acidic domain region. The chain crosses the membrane as a helical span at residues Gly-813–Trp-833. At Ser-834–Tyr-863 the chain is on the cytoplasmic side.

It belongs to the RLP family.

The protein localises to the cell membrane. Its function is as follows. Involved in plant defense. Confers resistance to the fungal pathogen C.fulvum through recognition of the AVR9 elicitor protein. This Solanum pimpinellifolium (Currant tomato) protein is Receptor-like protein 9DC3.